A 20-amino-acid polypeptide reads, in one-letter code: Tetracycline resistance leader peptide (20 aa).

In Bacillus cereus, this protein is Tetracycline resistance leader peptide (tetL).